The chain runs to 492 residues: N-succinylglutamate 5-semialdehyde dehydrogenase (492 aa).

Glycine 220–glycine 225 contacts NAD(+). Residues glutamate 243 and cysteine 277 contribute to the active site.

This sequence belongs to the aldehyde dehydrogenase family. AstD subfamily.

It carries out the reaction N-succinyl-L-glutamate 5-semialdehyde + NAD(+) + H2O = N-succinyl-L-glutamate + NADH + 2 H(+). It participates in amino-acid degradation; L-arginine degradation via AST pathway; L-glutamate and succinate from L-arginine: step 4/5. Its function is as follows. Catalyzes the NAD-dependent reduction of succinylglutamate semialdehyde into succinylglutamate. The chain is N-succinylglutamate 5-semialdehyde dehydrogenase from Salmonella gallinarum (strain 287/91 / NCTC 13346).